Reading from the N-terminus, the 143-residue chain is Small ribosomal subunit protein uS12 (143 aa).

Basic residues predominate over residues 1–20 (MGKCRGLRTARKLRSHRRDH). The disordered stretch occupies residues 1–26 (MGKCRGLRTARKLRSHRRDHKWHDKQ). Lys37 participates in a covalent cross-link: Glycyl lysine isopeptide (Lys-Gly) (interchain with G-Cter in SUMO2). N6-succinyllysine is present on Lys54. Pro62 carries the 3-hydroxyproline modification. Residue Lys135 is modified to N6-acetyllysine.

This sequence belongs to the universal ribosomal protein uS12 family. Component of the 40S small ribosomal subunit. Part of the small subunit (SSU) processome, composed of more than 70 proteins and the RNA chaperone small nucleolar RNA (snoRNA) U3. In terms of assembly, (Microbial infection) Interacts with the African swine fever virus (ASFV) ubiquitin-conjugating enzyme UBCv1; this interaction probably plays a role in the viral regulation of host protein synthesis. In terms of processing, hydroxylation at Pro-62 affects translation termination efficiency.

It localises to the cytoplasm. The protein resides in the cytosol. It is found in the rough endoplasmic reticulum. Its subcellular location is the nucleus. The protein localises to the nucleolus. In terms of biological role, component of the ribosome, a large ribonucleoprotein complex responsible for the synthesis of proteins in the cell. The small ribosomal subunit (SSU) binds messenger RNAs (mRNAs) and translates the encoded message by selecting cognate aminoacyl-transfer RNA (tRNA) molecules. The large subunit (LSU) contains the ribosomal catalytic site termed the peptidyl transferase center (PTC), which catalyzes the formation of peptide bonds, thereby polymerizing the amino acids delivered by tRNAs into a polypeptide chain. The nascent polypeptides leave the ribosome through a tunnel in the LSU and interact with protein factors that function in enzymatic processing, targeting, and the membrane insertion of nascent chains at the exit of the ribosomal tunnel. Plays an important role in translational accuracy. Part of the small subunit (SSU) processome, first precursor of the small eukaryotic ribosomal subunit. During the assembly of the SSU processome in the nucleolus, many ribosome biogenesis factors, an RNA chaperone and ribosomal proteins associate with the nascent pre-rRNA and work in concert to generate RNA folding, modifications, rearrangements and cleavage as well as targeted degradation of pre-ribosomal RNA by the RNA exosome. The sequence is that of Small ribosomal subunit protein uS12 (RPS23) from Sus scrofa (Pig).